The primary structure comprises 617 residues: MSPQRDRINAFYKDNPHPKGSRIVINREHLMIDRPYVLLAVLFVMFLSLIGLLAIAGIRLHRAAIYTAEIHKSLSTNLDVTNSIEHQVKDVLTPLFKIIGDEVGLRTPQRFTDLVKFISDKIKFLNPDREYDFRDLTWCINPPERIKLDYDQYCADVAAEELMNALVNSTLLETRTTNQFLAVSKGNCSGPTTIRGQFSNMSLSLLDLYLGRGYNVSSIVTMTSQGMYGGTYLVEKPNLSSKRSELSQLSMYRVFEVGVIRNPGLGAPVFHMTNYLEQPVSNDLSNCMVALGELKLAALCHGEDSITIPYQGSGKGVSFQLVKLGVWKSPTDMQSWVPLSTDDPVIDRLYLSSHRGVIADNQAKWAVPTTRTDDKLRMETCFQQACKGKIQALCENPEWAPLKDNRIPSYGVLSVDLSLTVELKIKIASGFGPLITHGSGMDLYKSNHNNVYWLTIPPMKNLALGVINTLEWIPRFKVSPYLFNVPIKEAGEDCHAPTYLPAEVDGDVKLSSNLVILPGQDLQYVLATYDTSRVEHAVVYYVYSPSRSFSYFYPFRLPIKGVPIELQVECFTWDQKLWCRHFCVLADSESGGHITHSGMEGMGVSCTVTREDGTNRR.

Over 1–37 the chain is Intravirion; it reads MSPQRDRINAFYKDNPHPKGSRIVINREHLMIDRPYV. The stalk stretch occupies residues 1–154; it reads MSPQRDRINA…RIKLDYDQYC (154 aa). Residues 38-58 traverse the membrane as a helical; Signal-anchor for type II membrane protein segment; that stretch reads LLAVLFVMFLSLIGLLAIAGI. At 59-617 the chain is on the virion surface side; the sequence is RLHRAAIYTA…VTREDGTNRR (559 aa). 5 N-linked (GlcNAc...) asparagine; by host glycosylation sites follow: Asn-168, Asn-187, Asn-200, Asn-215, and Asn-238. Disulfide bonds link Cys-188-Cys-606, Cys-287-Cys-300, Cys-381-Cys-494, Cys-386-Cys-394, and Cys-570-Cys-579. The interaction with host NECTIN4 receptor stretch occupies residues 458–543; sequence PMKNLALGVI…VEHAVVYYVY (86 aa).

The protein belongs to the paramyxoviruses hemagglutinin-neuraminidase family. Non-sialidase subfamily. In terms of assembly, homodimer; disulfide-linked. Further forms homotetramer (dimer of dimers). Interacts (via C-terminus) with human NECTIN4 (via N-terminus); this interaction allows attachment to the respiratory epithelium and viral entry. Interacts (via C-terminus) with human SLAMF1/CD150 (via N-terminus); this interaction allows attachment and viral entry into the CD150-expressing immune cells. Interacts with human CD46 antigen (via N-terminus); this interaction allows attachment and viral entry of vaccine and laboratory-adapted strains.

Its subcellular location is the virion membrane. The protein localises to the host cell membrane. In terms of biological role, attaches the virus to the human SLAMF1/CD150 receptor for entry into host dendritic cells, macrophages, activated memory T cells and naive or memory B cells, thereby explaining the long immunosuppression that follows infection. In the respiratory airways, binds to the NECTIN4 receptor for entry into the host cell. Binding of H protein to the receptor induces a conformational change that allows the F protein to trigger virion/cell membranes fusion. The vaccine and laboratory-adapted strains use host CD46 as an alternate receptor. The high degree of interaction between H and CD46 results in down-regulation of the latter from the surface of infected cells, rendering them more sensitive to c3b-mediated complement lysis. The chain is Hemagglutinin glycoprotein (H) from Measles virus (strain Edmonston) (MeV).